A 539-amino-acid polypeptide reads, in one-letter code: Cytochrome P450 monooxygenase tenB (539 aa).

The chain crosses the membrane as a helical span at residues 13–33; that stretch reads LGYYEKVAGVLGFLSIALLFW. The interval 439 to 460 is disordered; the sequence is PFRFSRASKDDDDDGKSTSSHA. C481 serves as a coordination point for heme.

It belongs to the cytochrome P450 family. Heme is required as a cofactor.

Its subcellular location is the membrane. The protein operates within secondary metabolite biosynthesis. Cytochrome P450 monooxygenase; part of the gene cluster that mediates the biosynthesis of tenellin-type 2-pyridones, iron-chelating compounds involved in iron stress tolerance, competition with the natural competitor fungus Metarhizium robertsii and insect hosts infection. TenB catalyzes the selective N-hydroxylation of the 2-pyridone nitrogen of yield tellinin and 15-hydroxytellenin (15-HT), respectively. The pathway begins with the assembly of the polyketide-amino acid backbone by the hybrid PKS-NRPS tenS with the help of the enoyl reductase tenC. These enzymes catalyze the synthesis of the pyrrolidine-2-dione intermediates pretellinin A, 11-hydropretellenin A, 12-hydropretellenin A, 13-hydropretellenin A, 14-hydropretellenin A, 12-oxopretellenin A and prototellinin D. The cytochrome P450 monooxygenase tenA then catalyzes an oxidative ring expansion of pretenellin A and 14-hydropretellenin A to form the 2-pyridone core, leading to pretenellin B and pyridovericin, respectively. The cytochrome P450 monooxygenase tenB is then required for the selective N-hydroxylation of the 2-pyridone nitrogen of yield tellinin and 15-hydroxytellenin (15-HT), respectively. The UDP-glucosyltransferase GT1 and the methyltransferase MT1, located outside the tenS gene cluster, contribute to the stepwise glycosylation and methylation of 15-HT to obtain the glycoside pyridovericin-N-O-(4-O-methyl-beta-D-glucopyranoside) (PMGP). Additional related compounds such as 1-O-methyl-15-HT, (8Z)-1-O-methyl-15-HT, and O-methyltenellin A are also produced but the enzymes involved in their biosynthesis have still to be determined. This chain is Cytochrome P450 monooxygenase tenB, found in Beauveria bassiana (White muscardine disease fungus).